Here is a 222-residue protein sequence, read N- to C-terminus: Transcriptional regulatory protein BasR (222 aa).

Residues 2-116 form the Response regulatory domain; sequence KILIVEDDTL…ELHARIRALL (115 aa). Asp-51 is subject to 4-aspartylphosphate. Positions 124–218 form a DNA-binding region, ompR/PhoB-type; it reads ESELIVGNLT…VRGFGYMLVA (95 aa).

Homodimer. In terms of processing, phosphorylated by BasS.

The protein localises to the cytoplasm. In terms of biological role, member of the two-component regulatory system BasS/BasR. BasR induces the transcription of the ugd, ais, arnBCADTEF and eptA-basRS loci, all involved in resistance to polymyxin. The polypeptide is Transcriptional regulatory protein BasR (basR) (Escherichia coli (strain K12)).